A 443-amino-acid polypeptide reads, in one-letter code: Phosphoglucosamine mutase (443 aa).

Residue serine 101 is the Phosphoserine intermediate of the active site. Mg(2+) is bound by residues serine 101, aspartate 239, aspartate 241, and aspartate 243. Serine 101 carries the post-translational modification Phosphoserine.

The protein belongs to the phosphohexose mutase family. Requires Mg(2+) as cofactor. Post-translationally, activated by phosphorylation.

It catalyses the reaction alpha-D-glucosamine 1-phosphate = D-glucosamine 6-phosphate. Its function is as follows. Catalyzes the conversion of glucosamine-6-phosphate to glucosamine-1-phosphate. This chain is Phosphoglucosamine mutase, found in Francisella tularensis subsp. tularensis (strain WY96-3418).